The following is a 421-amino-acid chain: NADH-quinone oxidoreductase subunit F (421 aa).

Residue 54-63 (GRGGAGFSTG) coordinates NAD(+). 166 to 213 (GAGAYICGEETALLESLEGKKGMPRLKPPFPAGFGLYGCPTTINNVES) is a binding site for FMN. [4Fe-4S] cluster contacts are provided by Cys344, Cys347, Cys350, and Cys390.

The protein belongs to the complex I 51 kDa subunit family. It depends on FMN as a cofactor. [4Fe-4S] cluster serves as cofactor.

It catalyses the reaction a quinone + NADH + 5 H(+)(in) = a quinol + NAD(+) + 4 H(+)(out). Functionally, NDH-1 shuttles electrons from NADH, via FMN and iron-sulfur (Fe-S) centers, to quinones in the respiratory chain. Couples the redox reaction to proton translocation (for every two electrons transferred, four hydrogen ions are translocated across the cytoplasmic membrane), and thus conserves the redox energy in a proton gradient. This Rickettsia conorii (strain ATCC VR-613 / Malish 7) protein is NADH-quinone oxidoreductase subunit F (nuoF).